A 274-amino-acid polypeptide reads, in one-letter code: Penicillin-insensitive murein endopeptidase (274 aa).

The N-terminal stretch at 1 to 19 (MNKTAIALLALLASSASLA) is a signal peptide. 3 disulfides stabilise this stretch: Cys-44–Cys-265, Cys-187–Cys-235, and Cys-216–Cys-223. 6 residues coordinate Zn(2+): His-110, His-113, Asp-120, Asp-147, His-150, and His-211. The disordered stretch occupies residues 227–274 (PLPPPGDGCGAELQSWFEPPKPGTTKPEKKTPPPLPPSCQALLDEHVI).

The protein belongs to the peptidase M74 family. In terms of assembly, dimer. Zn(2+) is required as a cofactor.

Its subcellular location is the periplasm. Functionally, murein endopeptidase that cleaves the D-alanyl-meso-2,6-diamino-pimelyl amide bond that connects peptidoglycan strands. Likely plays a role in the removal of murein from the sacculus. This Escherichia coli O17:K52:H18 (strain UMN026 / ExPEC) protein is Penicillin-insensitive murein endopeptidase.